A 570-amino-acid chain; its full sequence is Mitogen-activated protein kinase 11 (570 aa).

The Protein kinase domain occupies 26-317; the sequence is YEVLEVIGKG…AQEALADPYF (292 aa). Residues 32–40 and Lys-55 contribute to the ATP site; that span reads IGKGSYGLV. Asp-152 functions as the Proton acceptor in the catalytic mechanism. A Phosphothreonine modification is found at Thr-188. A TXY motif is present at residues 188–190; the sequence is TDY. Tyr-190 bears the Phosphotyrosine mark.

Belongs to the protein kinase superfamily. CMGC Ser/Thr protein kinase family. MAP kinase subfamily. Post-translationally, dually phosphorylated on Thr-188 and Tyr-190, which activates the enzyme.

It catalyses the reaction L-seryl-[protein] + ATP = O-phospho-L-seryl-[protein] + ADP + H(+). The catalysed reaction is L-threonyl-[protein] + ATP = O-phospho-L-threonyl-[protein] + ADP + H(+). With respect to regulation, activated by threonine and tyrosine phosphorylation. The sequence is that of Mitogen-activated protein kinase 11 (MPK11) from Oryza sativa subsp. japonica (Rice).